The chain runs to 276 residues: Syntaxin-12 (276 aa).

Ser2 is modified (N-acetylserine). At 2-248 (SYGPLDMYRN…RAAYYQKKSR (247 aa)) the chain is on the cytoplasmic side. Positions 33 to 131 (IQRISQATAQ…RRVSEKEKES (99 aa)) form a coiled coil. Residues Ser139, Ser142, Ser218, and Ser225 each carry the phosphoserine modification. The t-SNARE coiled-coil homology domain maps to 178 to 240 (LELIKERETA…ERATEQLQRA (63 aa)). A helical; Anchor for type IV membrane protein transmembrane segment spans residues 249–269 (KKMCILVLVLSVIIVILGLII). Over 270–276 (WLVYKTK) the chain is Vesicular.

The protein belongs to the syntaxin family. In terms of assembly, associates with the BLOC-1 complex. Interacts with BLOC1S6. Interacts with NAPA and SNAP23. Identified in a complex containing STX6, STX12, VAMP4 and VTI1A. Interacts with GRIPAP1. Forms a complex with GRIP1, GRIA2 and NSG1; controls the intracellular fate of AMPAR and the endosomal sorting of the GRIA2 subunit toward recycling and membrane targeting. Interacts with NSG1. Interacts with TPC1. Interacts (via N-terminus) with VPS13B.

It localises to the endosome membrane. The protein resides in the golgi apparatus membrane. It is found in the endomembrane system. The protein localises to the early endosome membrane. Its subcellular location is the recycling endosome membrane. Its function is as follows. SNARE promoting fusion of transport vesicles with target membranes. Together with SNARE STX6, promotes movement of vesicles from endosomes to the cell membrane, and may therefore function in the endocytic recycling pathway. Through complex formation with GRIP1, GRIA2 and NSG1 controls the intracellular fate of AMPAR and the endosomal sorting of the GRIA2 subunit toward recycling and membrane targeting. The protein is Syntaxin-12 (STX12) of Pongo abelii (Sumatran orangutan).